The sequence spans 275 residues: NH(3)-dependent NAD(+) synthetase (275 aa).

46-53 (GISGGQDS) provides a ligand contact to ATP. A Mg(2+)-binding site is contributed by Asp52. Residue Arg140 coordinates deamido-NAD(+). Residue Thr160 participates in ATP binding. Mg(2+) is bound at residue Glu165. The deamido-NAD(+) site is built by Lys173 and Asp180. The ATP site is built by Lys189 and Thr211. 260–261 (HK) is a deamido-NAD(+) binding site.

The protein belongs to the NAD synthetase family. Homodimer.

The catalysed reaction is deamido-NAD(+) + NH4(+) + ATP = AMP + diphosphate + NAD(+) + H(+). It participates in cofactor biosynthesis; NAD(+) biosynthesis; NAD(+) from deamido-NAD(+) (ammonia route): step 1/1. Catalyzes the ATP-dependent amidation of deamido-NAD to form NAD. Uses ammonia as a nitrogen source. This chain is NH(3)-dependent NAD(+) synthetase, found in Escherichia coli O7:K1 (strain IAI39 / ExPEC).